Here is a 64-residue protein sequence, read N- to C-terminus: Drosocin antimicrobial peptides (64 aa).

Positions 1 to 19 (MKFTIVFLLLACVFAMAVA) are cleaved as a signal peptide. A propeptide spanning residues 20-21 (TP) is cleaved from the precursor. Ser28 carries O-linked (GalNAc...) serine glycosylation. O-linked (GalNAc...) threonine glycosylation occurs at Thr32. The tract at residues 32-40 (TSHPRPIRV) is critical for inhibition of translation, possibly due to its role in mediating interactions with bacterial 23S rRNA and peptide chain release factors.

The protein belongs to the drosocin family. Associates with the bacterial 50S ribosomal complex, occupying the nascent peptide exit tunnel. Interacts with bacterial 23S rRNA; this interaction is direct. Interacts with bacterial rplV/50S ribosomal protein L22; this interaction is direct. Interacts with bacterial prfA/peptide chain release factor RF1; while associated with the bacterial 50S ribosomal complex, this interaction is direct and traps RF1 on the ribosome, inhibiting further translation. Post-translationally, proteolytically cleaved at a pair of basic residues corresponding to the RXK/RR optimal cleavage site for furin proteases to produce two distinct antibacterial peptides. In terms of processing, O-glycosylated. O-glycosylation may be required for efficient uptake by target bacterial cells. Monosaccharide modification of Thr-32 provides better antibacterial activity than disaccharide modification or no modification. O-glycosylation of Thr-32 is not essential for antimicrobial activity but enhances this activity by mediating interactions with the 23S rRNA and increasing the efficiency of translation inhibition.

It is found in the secreted. Antibacterial peptide with strong anti-Gram-negative bacteria activity. Significantly contributes to antibacterial activity against Enterobacter cloacae but not Providencia burhodogranariea. Inhibitor of bacterial translation machinery that targets translation termination in a prfA- or prfB-dependent manner. Binds within the nascent peptide exit tunnel of the bacterial large ribosomal subunit, potentially interfering with nascent chain translocation that occurs post-peptide bond formation. Binds prfA/RF1 (and potentially prfB/RF2), trapping it on the ribosome after release of the nascent polypeptide chain and preventing further translation. The resulting depletion of peptide chain release factors further disrupts bacterial translation by preventing ribosomal peptide chain release and inducing stop codon readthrough. Entry into target Escherichia coli cells requires the bacterial peptide antibiotic transporter sbmA. In terms of biological role, peptide with significant antibacterial activity against Providencia burhodogranariea but not Enterobacter cloacae. In Drosophila simulans (Fruit fly), this protein is Drosocin antimicrobial peptides (Dro).